The primary structure comprises 293 residues: Putative ribose uptake protein RbsU (293 aa).

10 consecutive transmembrane segments (helical) span residues 2-24, 34-56, 63-80, 95-117, 122-139, 154-171, 180-202, 212-234, 241-263, and 273-292; these read SIVALLIGLGPLIGWGFFPTVAS, IIGATVGTLIFAIILAVVTSSGF, LFALLSGAGWGFGQIITF, TTAFQLLGASLWGVFALGNWPGI, IGFTALVVILIGARMTVW, AVVLLLIGEFGYWLYSAA, LTAFLPQAMGMVIVAVIYGFMNM, ITWLQIISGFFFAFGALTYLISA, LATGFILSQTSVVLATLTGIYFL, and VITIIGLVLILVAASVTVFI.

It belongs to the GRP transporter (TC 2.A.7.5) family.

The protein localises to the cell membrane. Functionally, could be involved in the uptake of ribose. The chain is Putative ribose uptake protein RbsU (rbsU) from Staphylococcus aureus (strain Mu50 / ATCC 700699).